We begin with the raw amino-acid sequence, 270 residues long: MDQLQIKDLEMFAYHGLFPSEKELGQKFVVSAILSYDMTKAATDLDLTASVHYGELCQQWTTWFQETSEDLIETVAYKLVERTFEFYPLVQEMKLELKKPWAPVHLSLDTCSVTIHRRKQRAFIALGSNMGDKQANLKQAIDKLRARGIHILKESSVLATEPWGGVEQDSFANQVVEVETWLPAQDLLETLLAIESELGRVREVHWGPRLIDLDLLFVEDQILYTDDLILPHPYIAERLFVLESLQEIAPHFIHPILKQPIRNLYDALKK.

The tract at residues Met-1–Lys-119 is DHNA. Substrate-binding positions include Glu-21, Tyr-53, and Ile-72–Glu-73. Residue Lys-99 is the Proton donor/acceptor; for DHNA activity of the active site. The segment at Gln-120–Lys-270 is HPPK. Residues Thr-160–Trp-163, Phe-171–Asn-173, Leu-192–Glu-195, Arg-200–Leu-215, Asp-227–Pro-233, and Arg-238–Phe-240 contribute to the ATP site. Residues Asp-212 and Asp-214 each contribute to the Mg(2+) site.

It in the N-terminal section; belongs to the DHNA family. This sequence in the C-terminal section; belongs to the HPPK family. Homotrimer or homotetramer.

The enzyme catalyses 7,8-dihydroneopterin = 6-hydroxymethyl-7,8-dihydropterin + glycolaldehyde. It carries out the reaction 6-hydroxymethyl-7,8-dihydropterin + ATP = (7,8-dihydropterin-6-yl)methyl diphosphate + AMP + H(+). The protein operates within cofactor biosynthesis; tetrahydrofolate biosynthesis; 2-amino-4-hydroxy-6-hydroxymethyl-7,8-dihydropteridine diphosphate from 7,8-dihydroneopterin triphosphate: step 3/4. It functions in the pathway cofactor biosynthesis; tetrahydrofolate biosynthesis; 2-amino-4-hydroxy-6-hydroxymethyl-7,8-dihydropteridine diphosphate from 7,8-dihydroneopterin triphosphate: step 4/4. Functionally, catalyzes two sequential steps of tetrahydrofolate biosynthesis, the conversion of 7,8-dihydroneopterin to 6-hydroxymethyl-7,8-dihydropterin diphosphate. The chain is Bifunctional folate synthesis protein from Streptococcus pneumoniae serotype 4 (strain ATCC BAA-334 / TIGR4).